The chain runs to 87 residues: uncharacterized protein (87 aa).

The N-terminal stretch at 1–19 (MLVLQLAVLVTAVYAFVHA) is a signal peptide. The helical transmembrane segment at 51-71 (ILGFVFGVLGIVIAACAAGVY) threads the bilayer.

To M.tuberculosis Rv0476.

The protein localises to the membrane. This is an uncharacterized protein from Mycobacterium leprae (strain TN).